Reading from the N-terminus, the 283-residue chain is Non-selective voltage-gated ion channel VDAC1 (283 aa).

Alanine 2 carries the post-translational modification N-acetylalanine. An ATP-binding site is contributed by lysine 12. Lysine 12 is covalently cross-linked (Glycyl lysine isopeptide (Lys-Gly) (interchain with G-Cter in ubiquitin)). Phosphoserine is present on serine 13. Threonine 19 carries the phosphothreonine modification. Residue lysine 20 participates in ATP binding. Lysine 20 bears the N6-acetyllysine; alternate mark. N6-succinyllysine; alternate is present on lysine 20. Lysine 20 is covalently cross-linked (Glycyl lysine isopeptide (Lys-Gly) (interchain with G-Cter in ubiquitin); alternate). 2 beta stranded membrane passes run leucine 26–serine 35 and leucine 39–alanine 47. Glycyl lysine isopeptide (Lys-Gly) (interchain with G-Cter in ubiquitin) cross-links involve residues lysine 53 and lysine 61. The beta stranded transmembrane segment at valine 54–tryptophan 64 threads the bilayer. Tyrosine 67 carries the phosphotyrosine modification. The next 3 beta stranded transmembrane spans lie at leucine 69–asparagine 76, threonine 80–aspartate 89, and leucine 95–serine 104. Phosphothreonine is present on threonine 107. Lysine 109 is modified (N6-acetyllysine; alternate). Lysine 109 participates in a covalent cross-link: Glycyl lysine isopeptide (Lys-Gly) (interchain with G-Cter in ubiquitin); alternate. Residue lysine 110 forms a Glycyl lysine isopeptide (Lys-Gly) (interchain with G-Cter in ubiquitin) linkage. 4 beta stranded membrane-spanning segments follow: residues asparagine 111–arginine 120, valine 123–aspartate 130, serine 137–glycine 145, and leucine 150–glutamate 158. Residue lysine 161 forms a Glycyl lysine isopeptide (Lys-Gly) (interchain with G-Cter in ubiquitin) linkage. The next 6 membrane-spanning stretches (beta stranded) occupy residues arginine 163–threonine 175, phenylalanine 178–asparagine 185, glutamate 189–valine 198, leucine 202–threonine 211, arginine 218–isoleucine 227, and alanine 231–asparagine 238. The residue at position 193 (serine 193) is a Phosphoserine; by NEK1. Serine 240 bears the Phosphoserine mark. Leucine 242–glycine 244 provides a ligand contact to NAD(+). A beta stranded membrane pass occupies residues leucine 242 to leucine 251. An N6-acetyllysine modification is found at lysine 252. A beta stranded membrane pass occupies residues glycine 254 to leucine 263. Residue serine 260–aspartate 264 coordinates NAD(+). An N6-acetyllysine; alternate modification is found at lysine 266. Lysine 266 is covalently cross-linked (Glycyl lysine isopeptide (Lys-Gly) (interchain with G-Cter in ubiquitin); alternate). The beta stranded transmembrane segment at histidine 273 to glutamine 282 threads the bilayer. Residue lysine 274 forms a Glycyl lysine isopeptide (Lys-Gly) (interchain with G-Cter in ubiquitin) linkage.

This sequence belongs to the eukaryotic mitochondrial porin family. In terms of assembly, homodimer and homotrimer; in response to cyclic AMP or calcium; oligomerization is required for scramblase activity. Component of the mitochondrial permeability transition pore complex (mPTPC), at least composed of SPG7, VDAC1 and PPIF. Interacts with SPG7, NIPSNAP2 and SLC25A30. Interacts with hexokinases including HK1. The HK1-VDAC1 complex interacts with ATF2. Interacts with BCL2L1. Interacts with BAK1. Interacts with RTL10/BOP (via BH3 domain). Interacts with amyloid-beta and APP; induces VDAC1 dephosphorylation. Interacts with TMEM41B. Interacts with BCAP31. Interacts with HSPA9; this interaction couples ITPR1 to VDAC1. In terms of processing, phosphorylation at Ser-193 by NEK1 promotes the closed conformational state preventing excessive mitochondrial membrane permeability and subsequent apoptotic cell death after injury. Phosphorylation by the AKT-GSK3B axis stabilizes the protein probably by preventing ubiquitin-mediated proteasomal degradation. Post-translationally, ubiquitinated. Undergoes monoubiquitination and polyubiquitination by PRKN; monoubiquitination at Lys-274 inhibits apoptosis, whereas polyubiquitination leads to its degradation and promotes mitophagy. Deubiquitinated by USP30.

Its subcellular location is the mitochondrion outer membrane. It localises to the cell membrane. The protein localises to the membrane raft. It carries out the reaction chloride(in) = chloride(out). The catalysed reaction is K(+)(in) = K(+)(out). It catalyses the reaction ATP(in) = ATP(out). The enzyme catalyses Ca(2+)(in) = Ca(2+)(out). It carries out the reaction Na(+)(in) = Na(+)(out). The catalysed reaction is Mg(2+)(in) = Mg(2+)(out). It catalyses the reaction L-glutamate(out) = L-glutamate(in). The enzyme catalyses dopamine(out) = dopamine(in). It carries out the reaction acetylcholine(in) = acetylcholine(out). The catalysed reaction is Fe(III)-[cytochrome c](out) = Fe(III)-[cytochrome c](in). It catalyses the reaction a 1,2-diacyl-sn-glycero-3-phosphocholine(in) = a 1,2-diacyl-sn-glycero-3-phosphocholine(out). The enzyme catalyses a 1,2-diacyl-sn-glycero-3-phospho-L-serine(in) = a 1,2-diacyl-sn-glycero-3-phospho-L-serine(out). Its activity is regulated as follows. Inhibited by nitric oxide. Functionally, non-selective voltage-gated ion channel that mediates the transport of anions and cations through the mitochondrion outer membrane and plasma membrane. The channel at the outer mitochondrial membrane allows diffusion of small hydrophilic molecules; in the plasma membrane it is involved in cell volume regulation and apoptosis. It adopts an open conformation at low or zero membrane potential and a closed conformation at potentials above 30-40 mV. The open state has a weak anion selectivity whereas the closed state is cation-selective. Binds various signaling molecules, including the sphingolipid ceramide, the phospholipid phosphatidylcholine, and the sterols cholesterol and oxysterol. In depolarized mitochondria, acts downstream of PRKN and PINK1 to promote mitophagy or prevent apoptosis; polyubiquitination by PRKN promotes mitophagy, while monoubiquitination by PRKN decreases mitochondrial calcium influx which ultimately inhibits apoptosis. May participate in the formation of the permeability transition pore complex (PTPC) responsible for the release of mitochondrial products that triggers apoptosis. May mediate ATP export from cells. Part of a complex composed of HSPA9, ITPR1 and VDAC1 that regulates mitochondrial calcium-dependent apoptosis by facilitating calcium transport from the ER lumen to the mitochondria intermembrane space thus providing calcium for the downstream calcium channel MCU that directly releases it into mitochondria matrix. Mediates cytochrome c efflux. In terms of biological role, catalyzes the scrambling of phospholipids across the outer mitochondrial membrane; the mechanism is unrelated to channel activity and is capable of translocating both anionic and zwitterionic phospholipids. In Sus scrofa (Pig), this protein is Non-selective voltage-gated ion channel VDAC1.